Reading from the N-terminus, the 346-residue chain is MTHRFLAACRREPVDRVPVWMMRQAGRYQPSYRAVRQKVSFLELCRSPELIAQVTVAPIDEFGFDAAILFSDILVHLPAMGLDLTFEKGEKGKGDGGPKIGNPVRTRADVDALRVPVPKKDLPYVLDGVRAIRTALADRVPLIGFVGGPFTVASYAVEGGSQGFTRLKTMLYAEPATAHALFEKLTQAAIVQIEEQVAAGAQAAQIFESWLGELAREDLEEFSFPYLARIAEAVRKTGVPSIIFSTGTTAHLERMAKLGYDVVSVDWRIPIDEARARLPGVAVQGNYDSTLLLGPREVAVARAQQLLRAAGPTPGYIFNLGHGIQVGTPTENVKAVVDAVHAFGWK.

Substrate-binding positions include 23-27 (RQAGR), D72, Y155, S209, and H322.

The protein belongs to the uroporphyrinogen decarboxylase family. In terms of assembly, homodimer.

It is found in the cytoplasm. It carries out the reaction uroporphyrinogen III + 4 H(+) = coproporphyrinogen III + 4 CO2. The protein operates within porphyrin-containing compound metabolism; protoporphyrin-IX biosynthesis; coproporphyrinogen-III from 5-aminolevulinate: step 4/4. Its function is as follows. Catalyzes the decarboxylation of four acetate groups of uroporphyrinogen-III to yield coproporphyrinogen-III. The sequence is that of Uroporphyrinogen decarboxylase from Anaeromyxobacter dehalogenans (strain 2CP-C).